Reading from the N-terminus, the 448-residue chain is Phosphoglucosamine mutase (448 aa).

The Phosphoserine intermediate role is filled by serine 100. The Mg(2+) site is built by serine 100, aspartate 240, aspartate 242, and aspartate 244. Serine 100 bears the Phosphoserine mark.

The protein belongs to the phosphohexose mutase family. Mg(2+) is required as a cofactor. Activated by phosphorylation.

The enzyme catalyses alpha-D-glucosamine 1-phosphate = D-glucosamine 6-phosphate. Functionally, catalyzes the conversion of glucosamine-6-phosphate to glucosamine-1-phosphate. The polypeptide is Phosphoglucosamine mutase (Clostridium perfringens (strain ATCC 13124 / DSM 756 / JCM 1290 / NCIMB 6125 / NCTC 8237 / Type A)).